The following is a 142-amino-acid chain: Large ribosomal subunit protein uL13 (142 aa).

The protein belongs to the universal ribosomal protein uL13 family. As to quaternary structure, part of the 50S ribosomal subunit.

This protein is one of the early assembly proteins of the 50S ribosomal subunit, although it is not seen to bind rRNA by itself. It is important during the early stages of 50S assembly. The protein is Large ribosomal subunit protein uL13 of Glaesserella parasuis serovar 5 (strain SH0165) (Haemophilus parasuis).